The primary structure comprises 819 residues: Meiotically up-regulated gene 45 protein (819 aa).

Residues 797 to 817 form a helical membrane-spanning segment; it reads AMCLLTLLIGIYLILQVVFIY.

It is found in the membrane. Its function is as follows. Has a role in meiosis. In Schizosaccharomyces pombe (strain 972 / ATCC 24843) (Fission yeast), this protein is Meiotically up-regulated gene 45 protein (mug45).